Here is a 428-residue protein sequence, read N- to C-terminus: Serine--tRNA ligase (428 aa).

L-serine is bound at residue 231–233; the sequence is TSE. Residues 262–264 and Val-278 contribute to the ATP site; that span reads RRE. Glu-285 is a binding site for L-serine. Residue 349–352 coordinates ATP; it reads ELTS. Position 384 (Thr-384) interacts with L-serine.

This sequence belongs to the class-II aminoacyl-tRNA synthetase family. Type-1 seryl-tRNA synthetase subfamily. In terms of assembly, homodimer. The tRNA molecule binds across the dimer.

The protein resides in the cytoplasm. The enzyme catalyses tRNA(Ser) + L-serine + ATP = L-seryl-tRNA(Ser) + AMP + diphosphate + H(+). It catalyses the reaction tRNA(Sec) + L-serine + ATP = L-seryl-tRNA(Sec) + AMP + diphosphate + H(+). The protein operates within aminoacyl-tRNA biosynthesis; selenocysteinyl-tRNA(Sec) biosynthesis; L-seryl-tRNA(Sec) from L-serine and tRNA(Sec): step 1/1. In terms of biological role, catalyzes the attachment of serine to tRNA(Ser). Is also able to aminoacylate tRNA(Sec) with serine, to form the misacylated tRNA L-seryl-tRNA(Sec), which will be further converted into selenocysteinyl-tRNA(Sec). This is Serine--tRNA ligase from Bifidobacterium longum (strain NCC 2705).